The following is an 81-amino-acid chain: Acyl carrier protein 2 (81 aa).

In terms of domain architecture, Carrier spans 1 to 79; the sequence is MTETEILERI…DVIGAVQSLL (79 aa). Ser-39 is modified (O-(pantetheine 4'-phosphoryl)serine).

It belongs to the acyl carrier protein (ACP) family. 4'-phosphopantetheine is transferred from CoA to a specific serine of apo-ACP by AcpS. This modification is essential for activity because fatty acids are bound in thioester linkage to the sulfhydryl of the prosthetic group.

The protein resides in the cytoplasm. It functions in the pathway lipid metabolism; fatty acid biosynthesis. Functionally, carrier of the growing fatty acid chain in fatty acid biosynthesis. This is Acyl carrier protein 2 from Ralstonia nicotianae (strain ATCC BAA-1114 / GMI1000) (Ralstonia solanacearum).